Here is a 353-residue protein sequence, read N- to C-terminus: Photosystem II protein D1 (353 aa).

An N-acetylthreonine modification is found at threonine 2. Threonine 2 is modified (phosphothreonine). The next 3 membrane-spanning stretches (helical) occupy residues 29–46, 118–133, and 142–156; these read YIGW…TATS, HFLL…EWEL, and WIAV…AATA. Residue histidine 118 coordinates chlorophyll a. Position 126 (tyrosine 126) interacts with pheophytin a. Positions 170 and 189 each coordinate [CaMn4O5] cluster. A helical membrane pass occupies residues 197–218; that stretch reads FHMLGVAGVFGGSLFSAMHGSL. Histidine 198 contacts chlorophyll a. A quinone contacts are provided by residues histidine 215 and 264-265; that span reads SF. Residue histidine 215 participates in Fe cation binding. Histidine 272 is a Fe cation binding site. The chain crosses the membrane as a helical span at residues 274-288; that stretch reads FLAAWPVVGIWFTAL. [CaMn4O5] cluster contacts are provided by histidine 332, glutamate 333, aspartate 342, and alanine 344. A propeptide spanning residues 345–353 is cleaved from the precursor; the sequence is AIDAPSING.

The protein belongs to the reaction center PufL/M/PsbA/D family. PSII is composed of 1 copy each of membrane proteins PsbA, PsbB, PsbC, PsbD, PsbE, PsbF, PsbH, PsbI, PsbJ, PsbK, PsbL, PsbM, PsbT, PsbX, PsbY, PsbZ, Psb30/Ycf12, at least 3 peripheral proteins of the oxygen-evolving complex and a large number of cofactors. It forms dimeric complexes. Requires The D1/D2 heterodimer binds P680, chlorophylls that are the primary electron donor of PSII, and subsequent electron acceptors. It shares a non-heme iron and each subunit binds pheophytin, quinone, additional chlorophylls, carotenoids and lipids. D1 provides most of the ligands for the Mn4-Ca-O5 cluster of the oxygen-evolving complex (OEC). There is also a Cl(-1) ion associated with D1 and D2, which is required for oxygen evolution. The PSII complex binds additional chlorophylls, carotenoids and specific lipids. as cofactor. In terms of processing, tyr-161 forms a radical intermediate that is referred to as redox-active TyrZ, YZ or Y-Z. Post-translationally, C-terminally processed by CTPA; processing is essential to allow assembly of the oxygen-evolving complex and thus photosynthetic growth.

It localises to the plastid. The protein localises to the chloroplast thylakoid membrane. The enzyme catalyses 2 a plastoquinone + 4 hnu + 2 H2O = 2 a plastoquinol + O2. Functionally, photosystem II (PSII) is a light-driven water:plastoquinone oxidoreductase that uses light energy to abstract electrons from H(2)O, generating O(2) and a proton gradient subsequently used for ATP formation. It consists of a core antenna complex that captures photons, and an electron transfer chain that converts photonic excitation into a charge separation. The D1/D2 (PsbA/PsbD) reaction center heterodimer binds P680, the primary electron donor of PSII as well as several subsequent electron acceptors. The chain is Photosystem II protein D1 from Glycine max (Soybean).